Consider the following 649-residue polypeptide: Vitamin K-dependent protein S (649 aa).

Residues 1–14 (SKQQASQVLVRKRR) constitute a propeptide that is removed on maturation. The Gla domain maps to 15 to 60 (ANSMLEETKQGNLERECIEELCNKEEAREVFENDPETDYFYPKYLV). 4-carboxyglutamate is present on residues Glu20, Glu21, Glu28, Glu30, Glu33, Glu34, Glu39, Glu40, Glu43, Glu46, and Glu50. Residues Cys31 and Cys36 are joined by a disulfide bond. The tract at residues 61 to 89 (CLRSFQSGLFTAARQSTDAYPDLRSCVNA) is thrombin-sensitive. Residues 90–128 (IPDQCSPLPCNEDGYMSCKDGKASFTCTCKPGWQGERCE) form the EGF-like 1 domain. Intrachain disulfides connect Cys94–Cys107, Cys99–Cys116, Cys118–Cys127, Cys134–Cys148, Cys144–Cys157, Cys159–Cys172, Cys178–Cys190, Cys185–Cys199, Cys201–Cys214, Cys220–Cys229, Cys225–Cys238, Cys240–Cys255, and Cys422–Cys448. Residue Asp109 is modified to (3R)-3-hydroxyaspartate. One can recognise an EGF-like 2; calcium-binding domain in the interval 130 to 173 (DINECKDPSNINGGCSQICDNTPGSYHCSCKSGFVMLSNKKDCK). Residues 174–215 (DVDECSLKPNMCGTAVCKNIPGDFECECPEGYRYNLKSKSCE) form the EGF-like 3; calcium-binding domain. One can recognise an EGF-like 4; calcium-binding domain in the interval 216–256 (DVDECSENMCAQLCVNYPGGYTCYCDGKKGFKLAQDQKSCE). Laminin G-like domains follow at residues 272–448 (LLYL…NKHC) and 457–639 (YYPG…AHSC). Asn472, Asn482, and Asn503 each carry an N-linked (GlcNAc...) asparagine glycan. Cys612 and Cys639 are disulfide-bonded.

Post-translationally, the iron and 2-oxoglutarate dependent 3-hydroxylation of aspartate and asparagine is (R) stereospecific within EGF domains. As to expression, plasma.

The protein resides in the secreted. Functionally, anticoagulant plasma protein; it is a cofactor to activated protein C in the degradation of coagulation factors Va and VIIIa. It helps to prevent coagulation and stimulating fibrinolysis. This is Vitamin K-dependent protein S (PROS1) from Macaca mulatta (Rhesus macaque).